The chain runs to 144 residues: Large ribosomal subunit protein uL15 (144 aa).

The interval 1 to 53 is disordered; the sequence is MRLNTLSPAQGAKQAPKRVGRGIGSGLGKTGGRGHKGQNSRTGGGVRRGFEGG. Residues 21-31 are compositionally biased toward gly residues; that stretch reads RGIGSGLGKTG.

It belongs to the universal ribosomal protein uL15 family. As to quaternary structure, part of the 50S ribosomal subunit.

Its function is as follows. Binds to the 23S rRNA. The sequence is that of Large ribosomal subunit protein uL15 from Hamiltonella defensa subsp. Acyrthosiphon pisum (strain 5AT).